Reading from the N-terminus, the 616-residue chain is GDP-Man:Man(3)GlcNAc(2)-PP-Dol alpha-1,2-mannosyltransferase (616 aa).

Residue M1 is a topological domain, lumenal. A helical transmembrane segment spans residues 2–21; it reads GYLVVIGVIACVAYGILQVV. Residues 22–199 lie on the Cytoplasmic side of the membrane; that stretch reads STVLPRLLLV…RLIDGDYWKR (178 aa). The helical intramembrane region spans 200–220; sequence FTLIGQLFGSMVLSWEAMFEL. Residues 221–460 are Cytoplasmic-facing; the sequence is SPDVWIDTIG…FGLNAMWNEH (240 aa). An intramembrane region (helical) is located at residues 461–481; it reads FGIGVVEYMSRGVIPLCHASA. Over 482 to 616 the chain is Cytoplasmic; sequence GPLLDIVTNW…ERRSGIEKVY (135 aa).

The protein belongs to the glycosyltransferase group 1 family.

It is found in the endoplasmic reticulum membrane. The catalysed reaction is an alpha-D-Man-(1-&gt;3)-[alpha-D-Man-(1-&gt;6)]-beta-D-Man-(1-&gt;4)-beta-D-GlcNAc-(1-&gt;4)-alpha-D-GlcNAc-diphospho-di-trans,poly-cis-dolichol + 2 GDP-alpha-D-mannose = an alpha-D-Man-(1-&gt;2)-alpha-D-Man-(1-&gt;2)-alpha-D-Man-(1-&gt;3)-[alpha-D-Man-(1-&gt;6)]-beta-D-Man-(1-&gt;4)-beta-D-GlcNAc-(1-&gt;4)-alpha-D-GlcNAc-diphospho-di-trans,poly-cis-dolichol + 2 GDP + 2 H(+). It participates in protein modification; protein glycosylation. Its function is as follows. GDP-Man:Man(3)GlcNAc(2)-PP-Dol alpha-1,2-mannosyltransferase that operates in the biosynthetic pathway of dolichol-linked oligosaccharides, the glycan precursors employed in protein asparagine (N)-glycosylation. The assembly of dolichol-linked oligosaccharides begins on the cytosolic side of the endoplasmic reticulum membrane and finishes in its lumen. The sequential addition of sugars to dolichol pyrophosphate produces dolichol-linked oligosaccharides containing fourteen sugars, including two GlcNAcs, nine mannoses and three glucoses. Once assembled, the oligosaccharide is transferred from the lipid to nascent proteins by oligosaccharyltransferases. Catalyzes, on the cytoplasmic face of the endoplasmic reticulum, the addition of the fourth and fifth mannose residues to the dolichol-linked oligosaccharide chain, to produce Man(5)GlcNAc(2)-PP-dolichol core oligosaccharide. This chain is GDP-Man:Man(3)GlcNAc(2)-PP-Dol alpha-1,2-mannosyltransferase (ALG11), found in Debaryomyces hansenii (strain ATCC 36239 / CBS 767 / BCRC 21394 / JCM 1990 / NBRC 0083 / IGC 2968) (Yeast).